Reading from the N-terminus, the 531-residue chain is Cytochrome c oxidase subunit 1 (531 aa).

A helical transmembrane segment spans residues 18-38 (ILYLIYGMVSAMVATGMSVII). The Ca(2+) site is built by E41 and G46. 6 consecutive transmembrane segments (helical) span residues 59–79 (VLVT…ILIG), 103–123 (ISFW…LIET), 149–169 (AIFA…NFIV), 185–205 (PLFV…LPVL), 237–257 (LFYF…FGII), and 269–289 (IFGQ…GFLV). Residue H64 coordinates Fe(II)-heme a. A Cu cation-binding site is contributed by H243. A cross-link (1'-histidyl-3'-tyrosine (His-Tyr)) is located at residues 243 to 247 (HPEVY). Position 247 (Y247) interacts with O2. 2 residues coordinate Cu cation: H292 and H293. A run of 2 helical transmembrane segments spans residues 312 to 332 (MVIA…LYGG) and 340 to 360 (MLFA…GVML). The Mg(2+) site is built by H370 and D371. A heme a3-binding site is contributed by H378. H380 contacts Fe(II)-heme a. 2 helical membrane-spanning segments follow: residues 385–405 (MGAL…MFGL) and 414–434 (VHYW…HFLG). P443 is a Ca(2+) binding site. The helical transmembrane segment at 458–478 (WGSIMSVISVLIGLYSVLVQL) threads the bilayer.

Belongs to the heme-copper respiratory oxidase family. Component of the cytochrome c oxidase (complex IV, CIV), a multisubunit enzyme composed of a catalytic core of 3 subunits and several supernumerary subunits. The complex exists as a monomer or a dimer and forms supercomplexes (SCs) in the inner mitochondrial membrane with ubiquinol-cytochrome c oxidoreductase (cytochrome b-c1 complex, complex III, CIII). It depends on heme as a cofactor. Requires Cu cation as cofactor.

Its subcellular location is the mitochondrion inner membrane. The enzyme catalyses 4 Fe(II)-[cytochrome c] + O2 + 8 H(+)(in) = 4 Fe(III)-[cytochrome c] + 2 H2O + 4 H(+)(out). It participates in energy metabolism; oxidative phosphorylation. Its function is as follows. Component of the cytochrome c oxidase, the last enzyme in the mitochondrial electron transport chain which drives oxidative phosphorylation. The respiratory chain contains 3 multisubunit complexes succinate dehydrogenase (complex II, CII), ubiquinol-cytochrome c oxidoreductase (cytochrome b-c1 complex, complex III, CIII) and cytochrome c oxidase (complex IV, CIV), that cooperate to transfer electrons derived from NADH and succinate to molecular oxygen, creating an electrochemical gradient over the inner membrane that drives transmembrane transport and the ATP synthase. Cytochrome c oxidase is the component of the respiratory chain that catalyzes the reduction of oxygen to water. Electrons originating from reduced cytochrome c in the intermembrane space (IMS) are transferred via the dinuclear copper A center (CU(A)) of subunit 2 and heme A of subunit 1 to the active site in subunit 1, a binuclear center (BNC) formed by heme A3 and copper B (CU(B)). The BNC reduces molecular oxygen to 2 water molecules using 4 electrons from cytochrome c in the IMS and 4 protons from the mitochondrial matrix. The polypeptide is Cytochrome c oxidase subunit 1 (COX1) (Candida albicans (strain SC5314 / ATCC MYA-2876) (Yeast)).